Consider the following 401-residue polypeptide: Solute carrier family 22 member 17 (401 aa).

Transmembrane regions (helical) follow at residues 10–30, 35–55, 69–89, 100–120, 184–203, 218–238, 247–267, 277–297, 309–329, and 336–356; these read GIVL…AAAG, IMAL…GVYL, VALA…GLAL, MITA…FLES, NIWK…HAIR, FYLC…FLGV, GILL…LGLW, TFSV…TLLA, GLGL…AQRL, and FLQH…IMLL.

It belongs to the major facilitator (TC 2.A.1) superfamily. Organic cation transporter (TC 2.A.1.19) family. In terms of tissue distribution, widely expressed.

The protein resides in the cell membrane. The protein localises to the vacuole membrane. Its function is as follows. Cell surface receptor for LCN2 (24p3) that plays a key role in iron homeostasis and transport. Able to bind iron-bound LCN2 (holo-24p3), followed by internalization of holo-24p3 and release of iron, thereby increasing intracellular iron concentration and leading to inhibition of apoptosis. Also binds iron-free LCN2 (apo-24p3), followed by internalization of apo-24p3 and its association with an intracellular siderophore, leading to iron chelation and iron transfer to the extracellular medium, thereby reducing intracellular iron concentration and resulting in apoptosis. The sequence is that of Solute carrier family 22 member 17 (Slc22a17) from Mus musculus (Mouse).